The primary structure comprises 166 residues: Lipoprotein signal peptidase (166 aa).

3 helical membrane-spanning segments follow: residues 12-32 (WLWL…LILQ), 70-90 (WFFA…MYRS), and 102-122 (ALII…GFVV). Catalysis depends on residues D123 and D141. A helical membrane pass occupies residues 137 to 157 (FNLADTAICIGAALIVLEGFL).

Belongs to the peptidase A8 family.

It is found in the cell inner membrane. It carries out the reaction Release of signal peptides from bacterial membrane prolipoproteins. Hydrolyzes -Xaa-Yaa-Zaa-|-(S,diacylglyceryl)Cys-, in which Xaa is hydrophobic (preferably Leu), and Yaa (Ala or Ser) and Zaa (Gly or Ala) have small, neutral side chains.. The protein operates within protein modification; lipoprotein biosynthesis (signal peptide cleavage). Its function is as follows. This protein specifically catalyzes the removal of signal peptides from prolipoproteins. The chain is Lipoprotein signal peptidase from Salmonella paratyphi A (strain ATCC 9150 / SARB42).